The sequence spans 156 residues: Transcription elongation factor GreA (156 aa).

Positions 12-72 (YKKLEDELST…KEIEHELKYA (61 aa)) form a coiled coil.

This sequence belongs to the GreA/GreB family.

Necessary for efficient RNA polymerase transcription elongation past template-encoded arresting sites. The arresting sites in DNA have the property of trapping a certain fraction of elongating RNA polymerases that pass through, resulting in locked ternary complexes. Cleavage of the nascent transcript by cleavage factors such as GreA or GreB allows the resumption of elongation from the new 3'terminus. GreA releases sequences of 2 to 3 nucleotides. The sequence is that of Transcription elongation factor GreA from Dehalococcoides mccartyi (strain ATCC BAA-2266 / KCTC 15142 / 195) (Dehalococcoides ethenogenes (strain 195)).